A 60-amino-acid polypeptide reads, in one-letter code: Colanic acid capsular biosynthesis activation protein B (60 aa).

The chain is Colanic acid capsular biosynthesis activation protein B (rcsB) from Klebsiella aerogenes (Enterobacter aerogenes).